A 456-amino-acid chain; its full sequence is Probable glycine dehydrogenase (decarboxylating) subunit 1 (456 aa).

It belongs to the GcvP family. N-terminal subunit subfamily. As to quaternary structure, the glycine cleavage system is composed of four proteins: P, T, L and H. In this organism, the P 'protein' is a heterodimer of two subunits.

It catalyses the reaction N(6)-[(R)-lipoyl]-L-lysyl-[glycine-cleavage complex H protein] + glycine + H(+) = N(6)-[(R)-S(8)-aminomethyldihydrolipoyl]-L-lysyl-[glycine-cleavage complex H protein] + CO2. In terms of biological role, the glycine cleavage system catalyzes the degradation of glycine. The P protein binds the alpha-amino group of glycine through its pyridoxal phosphate cofactor; CO(2) is released and the remaining methylamine moiety is then transferred to the lipoamide cofactor of the H protein. In Legionella pneumophila (strain Corby), this protein is Probable glycine dehydrogenase (decarboxylating) subunit 1.